The sequence spans 753 residues: Bifunctional terpene synthase FUP1 (753 aa).

The segment at 1 to 329 (MGPLLYRSRH…CSACPRQNAW (329 aa)) is terpene cyclase. Residue Asp96 coordinates Mg(2+). The DDXXD 1 signature appears at 96-100 (DDTGE). An NSE/DTE motif is present at residues 231–239 (NDYFSWERE). A prenyltransferase region spans residues 330 to 745 (KNDTLSNGQN…MLRLCLAKLS (416 aa)). 3 residues coordinate isopentenyl diphosphate: Lys461, Arg464, and His493. The Mg(2+) site is built by Asp500 and Asp504. The DDXXD 2 motif lies at 500 to 504 (DDLED). Arg509 contributes to the dimethylallyl diphosphate binding site. An isopentenyl diphosphate-binding site is contributed by Arg510. Residues Lys587, Thr588, Gln625, Asn632, Lys640, and Lys650 each coordinate dimethylallyl diphosphate.

This sequence in the N-terminal section; belongs to the terpene synthase family. It in the C-terminal section; belongs to the FPP/GGPP synthase family. Hexamer. Requires Mg(2+) as cofactor.

The catalysed reaction is isopentenyl diphosphate + (2E,6E)-farnesyl diphosphate = (2E,6E,10E)-geranylgeranyl diphosphate + diphosphate. It functions in the pathway secondary metabolite biosynthesis; terpenoid biosynthesis. Its function is as follows. Bifunctional terpene synthase; part of the gene cluster that mediates the biosynthesis of the mycotoxin fusaproliferin (FUP) that belongs to the class of bicyclic sesterterpenoids. The FUP biosynthetic pathway starts with the enzyme encoded by FUP1 that combines a C-terminal prenyltransferase domain responsible for the synthesis of geranylgeranyl diphosphate with the N-terminal terpene cyclase domain, to yield preterpestacin I. Preterpestacin I is then decorated by oxygenation steps that are catalyzed by two cytochrome P450 monooxygenases. First, FUP2 introduces a hydroxyl group at the C-24 position resulting in the formation of preterpestacin IIa, which can be further oxidized. The second P450 monooxygenase catalyzes the hydroxylation at C-16 and C-17 of preterpestacin IIa, producing preterpestacin III. Subsequently, the FAD-dependent oxidoreductase FUP4 catalyzes the oxidation of the hydroxy group at the C-16 position to a keto group, leading to the formation of (-)-terpestacin, which is the immediate precursor of FUP. The final step in the proposed biosynthetic pathway is the addition of an acetyl group at the C-24 position of terpestacin, which is catalyzed by the acetyltransferase FUP5. This is Bifunctional terpene synthase FUP1 from Fusarium proliferatum (strain ET1) (Orchid endophyte fungus).